A 108-amino-acid chain; its full sequence is Protein YcgL (108 aa).

The YcgL domain occupies Met12–Leu96.

In Escherichia coli (strain K12 / MC4100 / BW2952), this protein is Protein YcgL.